We begin with the raw amino-acid sequence, 169 residues long: S-ribosylhomocysteine lyase (169 aa).

Residues His54, His58, and Cys128 each coordinate Fe cation.

It belongs to the LuxS family. In terms of assembly, homodimer. The cofactor is Fe cation.

The enzyme catalyses S-(5-deoxy-D-ribos-5-yl)-L-homocysteine = (S)-4,5-dihydroxypentane-2,3-dione + L-homocysteine. In terms of biological role, involved in the synthesis of autoinducer 2 (AI-2) which is secreted by bacteria and is used to communicate both the cell density and the metabolic potential of the environment. The regulation of gene expression in response to changes in cell density is called quorum sensing. Catalyzes the transformation of S-ribosylhomocysteine (RHC) to homocysteine (HC) and 4,5-dihydroxy-2,3-pentadione (DPD). The protein is S-ribosylhomocysteine lyase of Sulfurovum sp. (strain NBC37-1).